The chain runs to 172 residues: Xanthine-guanine phosphoribosyltransferase (172 aa).

5-phospho-alpha-D-ribose 1-diphosphate-binding positions include 47–48 (RG) and 106–114 (DDLVDTGKT). D107 lines the Mg(2+) pocket. Guanine contacts are provided by D110 and I153. Residues D110 and I153 each coordinate xanthine. GMP contacts are provided by residues 110–114 (DTGKT) and 152–153 (WI).

The protein belongs to the purine/pyrimidine phosphoribosyltransferase family. XGPT subfamily. As to quaternary structure, homotetramer. The cofactor is Mg(2+).

It localises to the cell inner membrane. The enzyme catalyses GMP + diphosphate = guanine + 5-phospho-alpha-D-ribose 1-diphosphate. The catalysed reaction is XMP + diphosphate = xanthine + 5-phospho-alpha-D-ribose 1-diphosphate. It catalyses the reaction IMP + diphosphate = hypoxanthine + 5-phospho-alpha-D-ribose 1-diphosphate. It participates in purine metabolism; GMP biosynthesis via salvage pathway; GMP from guanine: step 1/1. The protein operates within purine metabolism; XMP biosynthesis via salvage pathway; XMP from xanthine: step 1/1. Its function is as follows. Purine salvage pathway enzyme that catalyzes the transfer of the ribosyl-5-phosphate group from 5-phospho-alpha-D-ribose 1-diphosphate (PRPP) to the N9 position of the 6-oxopurines guanine and xanthine to form the corresponding ribonucleotides GMP (guanosine 5'-monophosphate) and XMP (xanthosine 5'-monophosphate), with the release of PPi. To a lesser extent, also acts on hypoxanthine. The polypeptide is Xanthine-guanine phosphoribosyltransferase (Rhodopseudomonas palustris (strain BisB5)).